We begin with the raw amino-acid sequence, 200 residues long: Signal peptidase complex catalytic subunit SEC11 (200 aa).

Residues 1-15 (MFAELAPYLSNPRQT) lie on the Cytoplasmic side of the membrane. Residues 16-33 (LAQLLNFALVLSTAFMGW) traverse the membrane as a helical; Signal-anchor for type II membrane protein segment. At 34–200 (KALSVYTNSS…MGVMVMLQRE (167 aa)) the chain is on the lumenal side. N41 is a glycosylation site (N-linked (GlcNAc...) asparagine). Catalysis depends on charge relay system residues S53 and H92. Residues 101-134 (GDGGKKSQRRLEREADKRSGPGLSSPVSHQMLTK) form a disordered region. Residues 103 to 119 (GGKKSQRRLEREADKRS) show a composition bias toward basic and acidic residues. D142 serves as the catalytic Charge relay system. The segment at 186–197 (VLLGIMGVMVML) is C-terminal short (CTS) helix.

Belongs to the peptidase S26B family. In terms of assembly, component of the signal peptidase complex (SPC) composed of a catalytic subunit SEC11 and three accessory subunits SPC1, SPC2 and SPC3. The complex induces a local thinning of the ER membrane which is used to measure the length of the signal peptide (SP) h-region of protein substrates. This ensures the selectivity of the complex towards h-regions shorter than 18-20 amino acids. SPC associates with the translocon complex.

The protein localises to the endoplasmic reticulum membrane. It carries out the reaction Cleavage of hydrophobic, N-terminal signal or leader sequences from secreted and periplasmic proteins.. Functionally, catalytic component of the signal peptidase complex (SPC) which catalyzes the cleavage of N-terminal signal sequences from nascent proteins as they are translocated into the lumen of the endoplasmic reticulum. Specifically cleaves N-terminal signal peptides that contain a hydrophobic alpha-helix (h-region) shorter than 18-20 amino acids. The sequence is that of Signal peptidase complex catalytic subunit SEC11 (SEC11) from Arthroderma benhamiae (strain ATCC MYA-4681 / CBS 112371) (Trichophyton mentagrophytes).